The chain runs to 248 residues: Pyridoxine 5'-phosphate synthase (248 aa).

Position 7 (asparagine 7) interacts with 3-amino-2-oxopropyl phosphate. Position 9–10 (9–10 (DH)) interacts with 1-deoxy-D-xylulose 5-phosphate. Residue arginine 18 participates in 3-amino-2-oxopropyl phosphate binding. The Proton acceptor role is filled by histidine 43. The 1-deoxy-D-xylulose 5-phosphate site is built by arginine 45 and histidine 50. The active-site Proton acceptor is the glutamate 70. Threonine 100 contacts 1-deoxy-D-xylulose 5-phosphate. Histidine 191 functions as the Proton donor in the catalytic mechanism. 3-amino-2-oxopropyl phosphate is bound by residues glycine 192 and 213–214 (GH).

The protein belongs to the PNP synthase family. Homooctamer; tetramer of dimers.

The protein localises to the cytoplasm. It carries out the reaction 3-amino-2-oxopropyl phosphate + 1-deoxy-D-xylulose 5-phosphate = pyridoxine 5'-phosphate + phosphate + 2 H2O + H(+). The protein operates within cofactor biosynthesis; pyridoxine 5'-phosphate biosynthesis; pyridoxine 5'-phosphate from D-erythrose 4-phosphate: step 5/5. Catalyzes the complicated ring closure reaction between the two acyclic compounds 1-deoxy-D-xylulose-5-phosphate (DXP) and 3-amino-2-oxopropyl phosphate (1-amino-acetone-3-phosphate or AAP) to form pyridoxine 5'-phosphate (PNP) and inorganic phosphate. The polypeptide is Pyridoxine 5'-phosphate synthase (Bordetella bronchiseptica (strain ATCC BAA-588 / NCTC 13252 / RB50) (Alcaligenes bronchisepticus)).